The chain runs to 141 residues: Hemoglobin subunit alpha-A (141 aa).

A Globin domain is found at V1 to R141. H58 is an O2 binding site. H87 is a binding site for heme b.

This sequence belongs to the globin family. As to quaternary structure, heterotetramer of two alpha chains and two beta chains. Red blood cells.

Functionally, involved in oxygen transport from the lung to the various peripheral tissues. The protein is Hemoglobin subunit alpha-A (HBAA) of Phasianus colchicus colchicus (Black-necked pheasant).